The primary structure comprises 368 residues: UDP-N-acetylglucosamine--N-acetylmuramyl-(pentapeptide) pyrophosphoryl-undecaprenol N-acetylglucosamine transferase (368 aa).

UDP-N-acetyl-alpha-D-glucosamine is bound by residues 11 to 13 (TGG), Asn-123, Arg-164, Ser-188, Ile-250, and Gln-295.

It belongs to the glycosyltransferase 28 family. MurG subfamily.

It localises to the cell inner membrane. It carries out the reaction di-trans,octa-cis-undecaprenyl diphospho-N-acetyl-alpha-D-muramoyl-L-alanyl-D-glutamyl-meso-2,6-diaminopimeloyl-D-alanyl-D-alanine + UDP-N-acetyl-alpha-D-glucosamine = di-trans,octa-cis-undecaprenyl diphospho-[N-acetyl-alpha-D-glucosaminyl-(1-&gt;4)]-N-acetyl-alpha-D-muramoyl-L-alanyl-D-glutamyl-meso-2,6-diaminopimeloyl-D-alanyl-D-alanine + UDP + H(+). The protein operates within cell wall biogenesis; peptidoglycan biosynthesis. Cell wall formation. Catalyzes the transfer of a GlcNAc subunit on undecaprenyl-pyrophosphoryl-MurNAc-pentapeptide (lipid intermediate I) to form undecaprenyl-pyrophosphoryl-MurNAc-(pentapeptide)GlcNAc (lipid intermediate II). This Solidesulfovibrio magneticus (strain ATCC 700980 / DSM 13731 / RS-1) (Desulfovibrio magneticus) protein is UDP-N-acetylglucosamine--N-acetylmuramyl-(pentapeptide) pyrophosphoryl-undecaprenol N-acetylglucosamine transferase.